The chain runs to 927 residues: Nuclear factor of activated T-cells, cytoplasmic 2 (927 aa).

The interval 1–29 (MDVPEPQPDPDGGDGPGHEPGGSPQDELD) is disordered. Residues S23, S53, S54, S56, S99, S107, and S110 each carry the phosphoserine modification. The tract at residues 111–116 (PRIEIT) is calcineurin-binding. The interval 119–201 (HELMQAGGAL…CVSPNNAGPD (83 aa)) is transactivation domain A (TAD-A). A phosphoserine mark is found at S136, S150, S170, S173, S174, S176, S177, S179, and S182. The interval 163–177 (YREPLCLSPASSGSS) is required for cytoplasmic retention of the phosphorylated form. 2 consecutive repeat copies span residues 186–202 (SPYT…GPDD) and 215–231 (SPRT…LAED). Residues 186-292 (SPYTSPCVSP…PHVALQDDSI (107 aa)) are 3 X approximate SP repeats. Disordered stretches follow at residues 203-299 (LCPQ…YPPT) and 322-341 (SKIW…PSKA). S215, S219, S223, S238, and S245 each carry phosphoserine. The segment covering 216–226 (PRTSPIMSPRT) has biased composition (polar residues). The Nuclear localization signal signature appears at 253-255 (KRR). Residues S257, S270, S276, S278, S282, S328, and S365 each carry the phosphoserine modification. Residues 267–277 (PAASPQRSRSP) show a composition bias toward low complexity. The stretch at 274 to 290 (SRSPSPQPSPHVALQDD) is one 3; approximate repeat. The RHD domain maps to 394–576 (ASLPPLEWPL…NPIECSQRSA (183 aa)). A DNA-binding region spans residues 423-430 (RAHYETEG). 3 positions are modified to phosphoserine: S757, S759, and S761. Disordered stretches follow at residues 790–812 (AGSQ…QQAS) and 841–903 (FGPS…QNLD). The span at 798-812 (GSTLPHTSSASQQAS) shows a compositional bias: polar residues. S860 carries the phosphoserine modification.

As to quaternary structure, member of the multicomponent NFATC transcription complex that consists of at least two components, a pre-existing cytoplasmic component NFATC2 and an inducible nuclear component NFATC1. Other members such as NFATC4, NFATC3 or members of the activating protein-1 family, MAF, GATA4 and Cbp/p300 can also bind the complex. The phosphorylated form specifically interacts with XPO1; which mediates nuclear export. NFATC proteins bind to DNA as monomers. Interacts with NFATC2IP. Interacts with FOXP3. Interacts with TBX21 ('Thr-302' phosphorylated form). Interacts with KAT2A. Interacts with HOMER2 and HOMER3; this interaction competes with calcineurin/PPP3CA-binding and hence prevents NFATC2 dephosphorylation and activation. Interacts with protein phosphatase PPP3CA/calcineurin A. Interacts with AKAP5 (via leucine zipper domain); this is required for NFATC2/NFAT1 recruitment to CRAC channels. In terms of processing, in resting cells, phosphorylated by NFATC-kinase on at least 18 sites in the 99-365 region. Upon cell stimulation, all these sites except Ser-245 are dephosphorylated by calcineurin. Dephosphorylation induces a conformational change that simultaneously exposes an NLS and masks an NES, which results in nuclear localization. Simultaneously, one site among Ser-53; Ser-54 and Ser-56 is phosphorylated; which is required for full transcriptional activity. Ubiquitinated in endothelial cells by RNF213 downstream of the non-canonical Wnt signaling pathway, leading to its degradation by the proteasome. As to expression, expressed in spleen, heart, testis, brain, placenta, muscle and pancreas. Expressed in the thymus. Expressed in the lung. Expressed in cartilage.

The protein localises to the cytoplasm. It localises to the nucleus. Its function is as follows. Plays a role in the inducible expression of cytokine genes in T cells, especially in the induction of the IL-2, IL-3, IL-4, TNF-alpha or GM-CSF. Promotes invasive migration through the activation of GPC6 expression and WNT5A signaling pathway. Is involved in the negative regulation of chondrogenesis. Recruited by AKAP5 to ORAI1 pore-forming subunit of CRAC channels in Ca(2+) signaling microdomains where store-operated Ca(2+) influx is coupled to calmodulin and calcineurin signaling and activation of NFAT-dependent transcriptional responses. The chain is Nuclear factor of activated T-cells, cytoplasmic 2 (Nfatc2) from Mus musculus (Mouse).